The primary structure comprises 207 residues: Nitrile hydratase subunit alpha (207 aa).

Residues Cys110, Cys113, Ser114, and Cys115 each coordinate Fe(3+). Residue Cys113 is modified to Cysteine sulfinic acid (-SO2H). Residue Cys115 is modified to Cysteine sulfenic acid (-SOH).

It belongs to the nitrile hydratase subunit alpha family. Heterodimer of an alpha and a beta chain. Requires Fe(3+) as cofactor. In terms of processing, oxidation on Cys-113 is essential for the activity. Oxidation on Cys-115 stabilizes the Fe-NO ligand coordinated in the inactive form.

The enzyme catalyses an aliphatic primary amide = an aliphatic nitrile + H2O. With respect to regulation, inactivated by nitrosylation of the iron center in the dark and activated by photo-induced nitric oxide (NO) release. Inactivated by oxidation of Cys-115 to a sulfenic acid. NHase catalyzes the hydration of various nitrile compounds to the corresponding amides. Industrial production of acrylamide is now being developed using some of the enzymes of this class. This Rhodococcus erythropolis (Arthrobacter picolinophilus) protein is Nitrile hydratase subunit alpha (nthA).